The following is a 558-amino-acid chain: S-layer protein (558 aa).

Positions 1–28 (MAMSLKKIGAIAVGGAMVATALASGVAA) are cleaved as a signal peptide. N-linked (GlcNAc...) asparagine glycans are attached at residues N112, N138, N158, N197, N226, N291, and N374.

It belongs to the Mj S-layer protein family.

The protein localises to the secreted. The protein resides in the cell wall. Its subcellular location is the S-layer. Functionally, S-layer protein. The S-layer is a paracrystalline mono-layered assembly of proteins which coat the surface of the cell. The chain is S-layer protein (sla) from Methanocaldococcus jannaschii (strain ATCC 43067 / DSM 2661 / JAL-1 / JCM 10045 / NBRC 100440) (Methanococcus jannaschii).